Reading from the N-terminus, the 556-residue chain is Arginine--tRNA ligase 1 (556 aa).

Positions 132–142 match the 'HIGH' region motif; sequence ANPTGNLHLGH.

The protein belongs to the class-I aminoacyl-tRNA synthetase family. Monomer.

Its subcellular location is the cytoplasm. The enzyme catalyses tRNA(Arg) + L-arginine + ATP = L-arginyl-tRNA(Arg) + AMP + diphosphate. This chain is Arginine--tRNA ligase 1 (argS1), found in Halalkalibacterium halodurans (strain ATCC BAA-125 / DSM 18197 / FERM 7344 / JCM 9153 / C-125) (Bacillus halodurans).